The primary structure comprises 188 residues: GTP cyclohydrolase 1 (188 aa).

Zn(2+) is bound by residues C78, H81, and C150.

This sequence belongs to the GTP cyclohydrolase I family. As to quaternary structure, homomer.

It carries out the reaction GTP + H2O = 7,8-dihydroneopterin 3'-triphosphate + formate + H(+). It participates in cofactor biosynthesis; 7,8-dihydroneopterin triphosphate biosynthesis; 7,8-dihydroneopterin triphosphate from GTP: step 1/1. This chain is GTP cyclohydrolase 1, found in Geobacillus sp. (strain WCH70).